Consider the following 345-residue polypeptide: 4-hydroxy-2-oxovalerate aldolase (345 aa).

The Pyruvate carboxyltransferase domain occupies 8-260; sequence ITVHDMTLRD…ETGVDVFKIQ (253 aa). 16-17 provides a ligand contact to substrate; it reads RD. Aspartate 17 is a Mn(2+) binding site. Histidine 20 acts as the Proton acceptor in catalysis. Residues serine 170 and histidine 199 each coordinate substrate. 2 residues coordinate Mn(2+): histidine 199 and histidine 201. Tyrosine 290 lines the substrate pocket.

The protein belongs to the 4-hydroxy-2-oxovalerate aldolase family.

The enzyme catalyses (S)-4-hydroxy-2-oxopentanoate = acetaldehyde + pyruvate. The sequence is that of 4-hydroxy-2-oxovalerate aldolase from Leptothrix cholodnii (strain ATCC 51168 / LMG 8142 / SP-6) (Leptothrix discophora (strain SP-6)).